We begin with the raw amino-acid sequence, 382 residues long: Galactokinase (382 aa).

34 to 37 (EHTD) contributes to the substrate binding site. 124–130 (GAGLSSS) contributes to the ATP binding site. The Mg(2+) site is built by Ser130 and Glu162. Asp174 acts as the Proton acceptor in catalysis. Tyr223 provides a ligand contact to substrate.

The protein belongs to the GHMP kinase family. GalK subfamily.

The protein localises to the cytoplasm. The catalysed reaction is alpha-D-galactose + ATP = alpha-D-galactose 1-phosphate + ADP + H(+). The protein operates within carbohydrate metabolism; galactose metabolism. Catalyzes the transfer of the gamma-phosphate of ATP to D-galactose to form alpha-D-galactose-1-phosphate (Gal-1-P). In Salmonella arizonae (strain ATCC BAA-731 / CDC346-86 / RSK2980), this protein is Galactokinase.